Consider the following 115-residue polypeptide: Immunoglobulin kappa chain variable 12-41 (115 aa).

Positions 1 to 20 (MSVLTQVLALLLLWLTGARC) are cleaved as a signal peptide. The framework-1 stretch occupies residues 21 to 43 (DIQMTQSPASLSASVGETVTITC). A disulfide bond links Cys-43 and Cys-108. The tract at residues 44-54 (RASGNIHNYLA) is complementarity-determining-1. Positions 55 to 69 (WYQQKQGKSPQLLVY) are framework-2. Positions 70 to 76 (NAKTLAD) are complementarity-determining-2. A framework-3 region spans residues 77–108 (GVPSRFSGSGSGTQYSLKINSLQPEDFGSYYC). The complementarity-determining-3 stretch occupies residues 109–115 (QHFWSTP).

The sequence is that of Immunoglobulin kappa chain variable 12-41 from Mus musculus (Mouse).